The chain runs to 631 residues: Phosphomethylpyrimidine synthase (631 aa).

Substrate contacts are provided by residues Asn239, Met268, Tyr297, His333, 353–355 (SRG), 394–397 (DGLR), and Glu433. His437 lines the Zn(2+) pocket. Tyr460 is a substrate binding site. Zn(2+) is bound at residue His501. Cys581, Cys584, and Cys589 together coordinate [4Fe-4S] cluster.

It belongs to the ThiC family. Homodimer. It depends on [4Fe-4S] cluster as a cofactor.

The catalysed reaction is 5-amino-1-(5-phospho-beta-D-ribosyl)imidazole + S-adenosyl-L-methionine = 4-amino-2-methyl-5-(phosphooxymethyl)pyrimidine + CO + 5'-deoxyadenosine + formate + L-methionine + 3 H(+). It participates in cofactor biosynthesis; thiamine diphosphate biosynthesis. Its function is as follows. Catalyzes the synthesis of the hydroxymethylpyrimidine phosphate (HMP-P) moiety of thiamine from aminoimidazole ribotide (AIR) in a radical S-adenosyl-L-methionine (SAM)-dependent reaction. In Salmonella typhi, this protein is Phosphomethylpyrimidine synthase.